A 989-amino-acid polypeptide reads, in one-letter code: MMESGVPPCAACGDDAHAACRACSYALCKACLDEDAAEGRTTCARCGGEYGAPDPAHGQGAVVEEEVEESHEPAAGGVRERVTMASQLSDHQDEGVHARTMSTHARTISSVSGVGSELNDESGKPIWKNRVESWKEKKKEKKASAKKAAAKAQAPPVEEQIMDEKDLTDAYEPLSRIIPISKNKLTPYRAVIIMRLVVLGLFFHYRITNPVYSAFGLWMTSVICEIWFGFSWILDQFPKWCPINRETYVDRLIARYGDGEDSGLAPVDFFVSTVDPLKEPPLITANTVLSILAVDYPVEKISCYVSDDGSAMLTFESLAETAEFARRWVPFCKKYSIEPRAPEFYFSQKIDYLKDKIHPSFVKERRAMKRDYEEYKVRINALVAKAQKTPEEGWIMQDGTPWPGNNPRDHPGMIQVFLGETGARDFDGNELPRLVYVSREKRPGYQHHKKAGAMNALVRVSAVLTNAPYILNLDCDHYVNNSKAVREAMCFMMDPSVGRDVCYVQFPQRFDGIDRSDRYANRNVVFFDVNMKGLDGLQGPVYVGTGCCFYRQALYGYGPPSLPALPKSSVCSWCCCCCPKKKAEKSEKEMHRDSRREDLESAIFNLREIDNYDEYERSMLISQMSFEKSFGLSSVFIESTLMENGGVPESANPSTLIKEAIHVISCGYEEKTEWGKEIGWIYGSVTEDILTGFKMHCRGWRSIYCMPIRPAFKGSAPINLSDRLHQVLRWALGSVEIFLSRHCPLWYGYGGGRLKWLQRLSYINTIVYPFTSLPLIAYCCLPAICLLTGKFIIPTLSNAATIWFLGLFISIIVTSVLELRWSGIGIEDWWRNEQFWVIGGVSAHLFAVFQGILKMIAGLDTNFTVTAKATDDTEFGELYVFKWTTVLIPPTSILVLNLVGVVAGFSDALNSGYESWGPLFGKVFFAMWVIMHLYPFLKGLMGRQNRTPTIVVLWSVLLASVFSLLWVKIDPFIGSSETTTTNSCANFDC.

Residues 1–184 (MMESGVPPCA…SRIIPISKNK (184 aa)) lie on the Cytoplasmic side of the membrane. Residues Cys9, Cys12, Cys20, Cys23, Cys28, Cys31, Cys43, and Cys46 each contribute to the Zn(2+) site. Residues 9-47 (CAACGDDAHAACRACSYALCKACLDEDAAEGRTTCARCG) form an RING-type; degenerate zinc finger. Residues 138 to 149 (KKEKKASAKKAA) show a composition bias toward basic residues. The segment at 138–158 (KKEKKASAKKAAAKAQAPPVE) is disordered. The helical transmembrane segment at 185 to 205 (LTPYRAVIIMRLVVLGLFFHY) threads the bilayer. Residues 206-213 (RITNPVYS) are Extracellular-facing. A helical transmembrane segment spans residues 214-234 (AFGLWMTSVICEIWFGFSWIL). At 235 to 772 (DQFPKWCPIN…INTIVYPFTS (538 aa)) the chain is on the cytoplasmic side. Ser272, Lys278, Glu279, and Asp308 together coordinate UDP-alpha-D-glucose. Asp308 is a catalytic residue. The stretch at 362 to 389 (VKERRAMKRDYEEYKVRINALVAKAQKT) forms a coiled coil. Residue Lys449 coordinates UDP-alpha-D-glucose. Residues Lys450 and Asp474 each contribute to the Mn(2+) site. Asp688 is a catalytic residue. The helical transmembrane segment at 773–793 (LPLIAYCCLPAICLLTGKFII) threads the bilayer. At 794 to 798 (PTLSN) the chain is on the extracellular side. Residues 799-819 (AATIWFLGLFISIIVTSVLEL) form a helical membrane-spanning segment. Residues 820–835 (RWSGIGIEDWWRNEQF) lie on the Cytoplasmic side of the membrane. A helical transmembrane segment spans residues 836 to 856 (WVIGGVSAHLFAVFQGILKMI). Topologically, residues 857–884 (AGLDTNFTVTAKATDDTEFGELYVFKWT) are extracellular. A glycan (N-linked (GlcNAc...) asparagine) is linked at Asn862. A helical membrane pass occupies residues 885-905 (TVLIPPTSILVLNLVGVVAGF). Topologically, residues 906 to 916 (SDALNSGYESW) are cytoplasmic. A helical membrane pass occupies residues 917-937 (GPLFGKVFFAMWVIMHLYPFL). The Extracellular portion of the chain corresponds to 938–946 (KGLMGRQNR). The chain crosses the membrane as a helical span at residues 947–967 (TPTIVVLWSVLLASVFSLLWV). At 968 to 989 (KIDPFIGSSETTTTNSCANFDC) the chain is on the cytoplasmic side.

This sequence belongs to the glycosyltransferase 2 family. Plant cellulose synthase subfamily. Mn(2+) is required as a cofactor. The cofactor is Zn(2+).

It localises to the cell membrane. It carries out the reaction [(1-&gt;4)-beta-D-glucosyl](n) + UDP-alpha-D-glucose = [(1-&gt;4)-beta-D-glucosyl](n+1) + UDP + H(+). Its pathway is glycan metabolism; plant cellulose biosynthesis. In terms of biological role, catalytic subunit of cellulose synthase terminal complexes ('rosettes'), required for beta-1,4-glucan microfibril crystallization, a major mechanism of the cell wall formation. Involved in the secondary cell wall formation. In Oryza sativa subsp. japonica (Rice), this protein is Cellulose synthase A catalytic subunit 4 [UDP-forming] (CESA4).